Here is a 711-residue protein sequence, read N- to C-terminus: Progesterone receptor (711 aa).

Positions 1–347 (MEDKSKQCLQ…YGFDALPRKI (347 aa)) are modulating, Pro-Rich. 2 consecutive NR C4-type zinc fingers follow at residues 348–368 (CLIC…CGSC) and 384–408 (CAGR…LKKC). The segment at residues 348-420 (CLICSDEASG…AGMVLGGRKF (73 aa)) is a DNA-binding region (nuclear receptor). Residues 457-691 (QEVQYFPELL…EFPEMMTEVI (235 aa)) enclose the NR LBD domain.

This sequence belongs to the nuclear hormone receptor family. NR3 subfamily. Expressed in all tissues examined: highly expressed in testis and brain. Also expressed in heart, lung, liver, kidney, stomach and small intestine.

It localises to the nucleus. Its function is as follows. The steroid hormones and their receptors are involved in the regulation of eukaryotic gene expression and affect cellular proliferation and differentiation in target tissues. The sequence is that of Progesterone receptor (pgr) from Rana dybowskii (Dybovsky's frog).